A 785-amino-acid polypeptide reads, in one-letter code: Neutral ceramidase (785 aa).

An N-terminal signal peptide occupies residues 1-35; it reads MEASSWLCYQARGFGSSRVWLWLLLALVLLNCSLV. Asn31 is a glycosylation site (N-linked (GlcNAc...) asparagine). The active-site Nucleophile is Ser359. N-linked (GlcNAc...) asparagine glycans are attached at residues Asn377, Asn675, and Asn685.

This sequence belongs to the neutral ceramidase family. Expressed in seedlings, with higher levels in roots than in shoots.

It localises to the secreted. It is found in the endoplasmic reticulum. The protein localises to the golgi apparatus. The enzyme catalyses an N-acylsphing-4-enine + H2O = sphing-4-enine + a fatty acid. Its activity is regulated as follows. Enhanced activity in the presence of calcium, magnesium, manganese and zinc ions, but inhibited activity in the presence of iron ion. Functionally, hydrolyzes the sphingolipid ceramide into sphingosine and free fatty acid. Uses ceramide instead of phytoceramide as substrate. The protein is Neutral ceramidase of Oryza sativa subsp. japonica (Rice).